A 109-amino-acid chain; its full sequence is Spermidine export protein MdtI (109 aa).

4 helical membrane passes run Trp6–Leu26, Ile36–Val56, Ala64–Phe84, and Leu88–Leu108.

This sequence belongs to the drug/metabolite transporter (DMT) superfamily. Small multidrug resistance (SMR) (TC 2.A.7.1) family. MdtI subfamily. Forms a complex with MdtJ.

It is found in the cell inner membrane. Its function is as follows. Catalyzes the excretion of spermidine. The polypeptide is Spermidine export protein MdtI (Escherichia coli O81 (strain ED1a)).